Here is a 299-residue protein sequence, read N- to C-terminus: METLLSPSTLLSPLRGSKKKPASPAASASSSSSSPARSVVSCALRRQQPPPQAVAAWRGDGGRGGGVGSWATFLQHGLAAAALSLAISMAPAPAPAVASEFDVLNGGPPEDTYVVDDAGVLSRVTKSDVKRLVRDLESRKNIRINFITVRKLTSKADAFEYADQVLEKWYPTVEEGNNKGIVVLVTSQKEGAITGGPAFVQAVGDEILDSTVSENLPVLATDEKYNEAIYTTAKRLAAAIDGLPDPGGPTFKDNKRESNFKTKEETEEKRGQFTLVVGGLLVIAFVVPMAQYYAYISKK.

2 stretches are compositionally biased toward low complexity: residues 1–14 (METLLSPSTLLSPL) and 22–36 (ASPAASASSSSSSPA). The N-terminal 41 residues, 1–41 (METLLSPSTLLSPLRGSKKKPASPAASASSSSSSPARSVVS), are a transit peptide targeting the chloroplast. 2 disordered regions span residues 1-60 (METL…WRGD) and 244-265 (PDPGGPTFKDNKRESNFKTKEE). Residues 42 to 98 (CALRRQQPPPQAVAAWRGDGGRGGGVGSWATFLQHGLAAAALSLAISMAPAPAPAVA) constitute a thylakoid transit peptide. Residues 252–265 (KDNKRESNFKTKEE) show a composition bias toward basic and acidic residues. Residues 276-296 (VVGGLLVIAFVVPMAQYYAYI) traverse the membrane as a helical segment.

It belongs to the UPF0603 family.

It is found in the plastid. The protein resides in the chloroplast thylakoid membrane. The polypeptide is UPF0603 protein OsI_019212, chloroplastic (Oryza sativa subsp. indica (Rice)).